Here is a 275-residue protein sequence, read N- to C-terminus: Methyltransferase str2 (275 aa).

The protein belongs to the methyltransferase superfamily. LaeA methyltransferase family.

It functions in the pathway mycotoxin biosynthesis. Its function is as follows. Methyltransferase; part of the gene cluster that mediates the biosynthesis of strobilurin A, an antifungal polyketide that contains a key beta-methoxyacrylate toxophore that targets the complex III of the mitochondrial electron transport chain. Strobilurin biosynthesis begins with construction of benzoyl CoA by step-wise elimination of ammonia from phenylalanine by the phenylalanine ammonia-lyase str11, oxygenation by str8 and retro-Claisen reaction to form benzoic acid, which is activated to its CoA thiolester benzoyl CoA by the dedicated CoA ligase str10. Benzoyl CoA forms the starter unit for the highly reducing polyketide synthase stpks1 that produces the polyketide prestrobilutin A. The FAD-dependent oxygenase str9 then catalyzes the key oxidative rearrangement responsible for the creation of the beta-methoxyacrylate toxophore. Str9 performs epoxidation of the 2,3 olefin of prestrobilutin A, followed by Meinwald rearrangement to furnish the aldehyde intermediate. Rapid enolization of the aldehyde intermediate would give the beta-methoxyacrylate skeleton and methylations catalyzed by str2 and str3 complete the synthesis and lead to the production of strobilurin A. The short-chain dehydrogenase stl2 and the dehydrogenase str4 play a role in the shunt pathway leading to the production of bolineol. The cluster encodes no obvious halogenase gene that could be involved in production of strobilurin B, nor any obvious dimethylallyl-transferase that could be involved in the production of strobilurin G. It is possible that unknown proteins encoded in, or near, the cluster (such as str1 or stl1) may form new classes of halogenases or dimethylally-transferases, or that the responsible genes are located elsewhere on the genome. Similarly, proteins encoded by str5/str6 hydrolases appear to have no chemical role in the biosynthesis of strobilurin A. Finally, no obvious self-resistance gene is found within the cluster. This chain is Methyltransferase str2, found in Strobilurus tenacellus.